Here is a 1573-residue protein sequence, read N- to C-terminus: Soluble scavenger receptor cysteine-rich domain-containing protein SSC5D (1573 aa).

The first 16 residues, 1-16 (MRVLACLLAALVGIQA), serve as a signal peptide directing secretion. The SRCR 1 domain maps to 20–120 (LRLADGPHGC…HEEDAGVVCA (101 aa)). 3 cysteine pairs are disulfide-bonded: Cys45-Cys109, Cys58-Cys119, and Cys89-Cys99. The segment at 153-192 (EPLVTHAPRPAGNPQNASRKKSPRPKQAKSTRAPLLTTGA) is disordered. The N-linked (GlcNAc...) asparagine glycan is linked to Asn168. A compositionally biased stretch (basic residues) spans 170-181 (SRKKSPRPKQAK). SRCR domains lie at 198-298 (LRLV…LVCT) and 304-404 (LRLA…AVCD). 6 disulfide bridges follow: Cys223–Cys287, Cys236–Cys297, Cys267–Cys277, Cys329–Cys393, Cys342–Cys403, and Cys373–Cys383. N-linked (GlcNAc...) asparagine glycans are attached at residues Asn376 and Asn420. A disordered region spans residues 412-465 (PPTAPTDSNNSTPREAASRPPSTMTSQAPGTAGVSPPPASPTVLWEPGPEAGSP). Polar residues predominate over residues 431–440 (PPSTMTSQAP). Residues 467–568 (LRLVAGPSKC…HNEDVGVTCT (102 aa)) form the SRCR 4 domain. 3 disulfide bridges follow: Cys492–Cys557, Cys505–Cys567, and Cys537–Cys547. The segment at 614–769 (EKTTTKAPGK…SVSTTGESGL (156 aa)) is disordered. Residues 626-637 (KSTKKWVTKNAK) are compositionally biased toward basic residues. Polar residues predominate over residues 654–671 (AQSPPDLTSQTTAALTTE). Basic and acidic residues predominate over residues 672–685 (ASRRPTSEFTRRPT). Composition is skewed to polar residues over residues 687–702 (EAPQRWTSHTTATLTP) and 711–735 (KTMAMLTTQGPQEMTSESTIKSIPQ). Residues 772-872 (VRLADGPNRC…HEEDVGLTCT (101 aa)) enclose the SRCR 5 domain. Intrachain disulfides connect Cys797–Cys861, Cys810–Cys871, and Cys841–Cys851. Disordered stretches follow at residues 895–1475 (KGTT…PCVA) and 1554–1573 (MPAPTTTTPEEEERPLRGDV). The span at 924–934 (RLPDTGSKDGY) shows a compositional bias: basic and acidic residues. Composition is skewed to pro residues over residues 1004-1020 (PPTPSPGPSASPGPPGP) and 1083-1093 (TPEPSPTPLPT). A compositionally biased stretch (polar residues) spans 1101-1140 (DPSTPSEVTSLSPTSEQVPESDTTPDLDTTPYSSTVSEYS). The span at 1144-1160 (DPSPSPHPTTTPDPTMA) shows a compositional bias: pro residues. Composition is skewed to low complexity over residues 1161–1175 (PDPITTLNPTVTPHF) and 1185–1277 (PHPT…MPHP). The segment covering 1278–1328 (TTTPHPTTTPHPTTTPHPTTTPHPTMTPDPTTTPYPTTTPDPTTTPHPTTP) has biased composition (pro residues). Composition is skewed to polar residues over residues 1335 to 1354 (VITTVSLPTSLGTELSSPTL) and 1364 to 1380 (PQLTFTAPAPHTSTSQI). Low complexity predominate over residues 1381–1401 (PTLEPSPALESSPSRSSTATS). Residues 1464-1475 (GQSPGPHGPCVA) are compositionally biased toward pro residues.

Interacts with LGALS1 and laminin. As to expression, highly expressed in monocytes/macrophages and T-lymphocytes. Highly expressed in placenta and spleen, and also detected at lower levels in colon, and more weakly in lung, heart and kidney.

It localises to the secreted. The protein resides in the cytoplasm. Functionally, binds to extracellular matrix proteins. Binds to pathogen-associated molecular patterns (PAMPs) present on the cell walls of Gram-positive and Gram-negative bacteria and fungi, behaving as a pattern recognition receptor (PRR). Induces bacterial and fungal aggregation and subsequent inhibition of PAMP-induced cytokine release. Does not possess intrinsic bactericidal activity. May play a role in the innate defense and homeostasis of certain epithelial surfaces. The polypeptide is Soluble scavenger receptor cysteine-rich domain-containing protein SSC5D (SSC5D) (Homo sapiens (Human)).